We begin with the raw amino-acid sequence, 558 residues long: Atlastin-1 (558 aa).

The segment at methionine 1–proline 28 is disordered. The tract at residues methionine 1–proline 34 is N-terminal hypervariable region (HVR). At methionine 1–alanine 449 the chain is on the cytoplasmic side. Residues serine 10, serine 22, and serine 23 each carry the phosphoserine modification. The region spanning aspartate 64 to serine 309 is the GB1/RHD3-type G domain. The GDP site is built by arginine 77, lysine 78, glycine 79, lysine 80, serine 81, phenylalanine 82, glutamine 148, arginine 217, aspartate 218, valine 276, and asparagine 279. 6 residues coordinate GTP: arginine 77, lysine 78, glycine 79, lysine 80, serine 81, and phenylalanine 82. Serine 81 is a Mg(2+) binding site. Residues arginine 217, aspartate 218, and valine 276 each contribute to the GTP site. The tract at residues methionine 347–serine 438 is 3HB (three-helix bundle) domain. Lysine 395 carries the post-translational modification N6-acetyllysine. Residues leucine 418 to lysine 439 are a coiled coil. The segment at lysine 439–threonine 447 is linker. A helical transmembrane segment spans residues threonine 450–leucine 470. A topological domain (lumenal) is located at residue aspartate 471. Residues isoleucine 472–alanine 492 traverse the membrane as a helical segment. Residues tyrosine 493 to methionine 558 lie on the Cytoplasmic side of the membrane. The segment at asparagine 521–methionine 558 is autoinhibitory domain.

This sequence belongs to the TRAFAC class dynamin-like GTPase superfamily. GB1/RHD3 GTPase family. GB1 subfamily. In terms of assembly, monomeric and homodimeric. The homodimer, transiently formed by two molecules on opposing membranes, is the active form mediating ER membrane fusion. Interacts with REEP1, REEP5, RTN3 and RTN4 (via the transmembrane region); these proteins are involved in endoplasmic reticulum tubular network organization. Interacts with ZFYVE27; both proteins are involved in endoplasmic reticulum tubular network organization. Interacts with ARL6IP1; both proteins are involved in endoplasmic reticulum tubular network organization. Interacts with SPAST; the interaction is direct, could recruit SPAST to Golgi membranes. Interacts (via N-terminal region) with MAP4K4 (via CNH regulatory domain). May interact with TMED2. Interacts with CPT1C. Phosphorylated. Phosphorylation, by different kinases, of the N-terminal hypervariable region (HVR) regulates the ATL1-mediated membrane tethering step.

It localises to the endoplasmic reticulum membrane. It is found in the golgi apparatus membrane. The protein resides in the cell projection. Its subcellular location is the axon. The catalysed reaction is GTP + H2O = GDP + phosphate + H(+). Its function is as follows. Atlastin-1 (ATL1) is a membrane-anchored GTPase that mediates the GTP-dependent fusion of endoplasmic reticulum (ER) membranes, maintaining the continuous ER network. It facilitates the formation of three-way junctions where ER tubules intersect. Two atlastin-1 on neighboring ER tubules bind GTP and form loose homodimers through the GB1/RHD3-type G domains and 3HB regions. Upon GTP hydrolysis, the 3HB regions tighten, pulling the membranes together to drive their fusion. After fusion, the homodimer disassembles upon release of inorganic phosphate (Pi). Subsequently, GDP dissociates, resetting the monomers to a conformation ready for a new fusion cycle. May also regulate more or less directly Golgi biogenesis. Indirectly regulates axonal development. The sequence is that of Atlastin-1 from Bos taurus (Bovine).